A 161-amino-acid polypeptide reads, in one-letter code: Endoribonuclease YbeY (161 aa).

Zn(2+) contacts are provided by His120, His124, and Asp130.

The protein belongs to the endoribonuclease YbeY family. Requires Zn(2+) as cofactor.

It localises to the cytoplasm. Its function is as follows. Single strand-specific metallo-endoribonuclease involved in late-stage 70S ribosome quality control and in maturation of the 3' terminus of the 16S rRNA. In Chlamydia muridarum (strain MoPn / Nigg), this protein is Endoribonuclease YbeY.